The chain runs to 85 residues: Beta-insect depressant toxin Lqh-dprIT3c (85 aa).

An N-terminal signal peptide occupies residues 1 to 21 (MKLLLLLTISASMLIEGLVNA). Positions 22 to 82 (DGYIRGGDGC…EWDYETNTCG (61 aa)) constitute an LCN-type CS-alpha/beta domain. Intrachain disulfides connect Cys-31–Cys-81, Cys-35–Cys-56, Cys-42–Cys-63, and Cys-46–Cys-65. Gly-82 is subject to Glycine amide.

The protein belongs to the long (4 C-C) scorpion toxin superfamily. Sodium channel inhibitor family. Beta subfamily. Expressed by the venom gland.

The protein localises to the secreted. Depressant insect beta-toxins cause a transient contraction paralysis followed by a slow flaccid paralysis. They bind voltage-independently at site-4 of sodium channels (Nav) and block action potentials, primarily by depolarizing the axonal membrane and suppressing the sodium current. This depressant toxin is active only on insects. It is found in a relatively small amount in the venom, and its activity on insects is 10-fold higher compared to other known depressant toxins. This Leiurus hebraeus (Hebrew deathstalker scorpion) protein is Beta-insect depressant toxin Lqh-dprIT3c.